We begin with the raw amino-acid sequence, 474 residues long: Calcitonin receptor (474 aa).

The first 24 residues, 1 to 24 (MRFTFTSRCLALFLLLNHPTPILP), serve as a signal peptide directing secretion. At 25 to 146 (AFSNQTYPTI…FTPEKLKNAY (122 aa)) the chain is on the extracellular side. Residues asparagine 28, asparagine 73, asparagine 125, and asparagine 130 are each glycosylated (N-linked (GlcNAc...) asparagine). Disulfide bonds link cysteine 55–cysteine 81, cysteine 72–cysteine 112, and cysteine 95–cysteine 134. The chain crosses the membrane as a helical span at residues 147 to 169 (VLYYLAIVGHSLSIFTLVISLGI). Topologically, residues 170-181 (FVFFRSLGCQRV) are cytoplasmic. A helical membrane pass occupies residues 182 to 202 (TLHKNMFLTYILNSMIIIIHL). At 203-219 (VEVVPNGELVRRDPVSC) the chain is on the extracellular side. An intrachain disulfide couples cysteine 219 to cysteine 289. A helical membrane pass occupies residues 220–242 (KILHFFHQYMMACNYFWMLCEGI). Residues 243–259 (YLHTLIVVAVFTEKQRL) are Cytoplasmic-facing. Residues 260–280 (RWYYLLGWGFPLVPTTIHAIT) form a helical membrane-spanning segment. The Extracellular portion of the chain corresponds to 281–296 (RAVYFNDNCWLSVETH). Residues 297–320 (LLYIIHGPVMAALVVNFFFLLNIV) traverse the membrane as a helical segment. At 321 to 340 (RVLVTKMRETHEAESHMYLK) the chain is on the cytoplasmic side. The chain crosses the membrane as a helical span at residues 341-359 (AVKATMILVPLLGIQFVVF). The Extracellular portion of the chain corresponds to 360 to 367 (PWRPSNKM). Residues 368–394 (LGKIYDYVMHSLIHFQGFFVATIYCFC) form a helical membrane-spanning segment. At 395-474 (NNEVQTTVKR…LNIIEQESSA (80 aa)) the chain is on the cytoplasmic side.

This sequence belongs to the G-protein coupled receptor 2 family. In terms of assembly, heterodimer of CALCR and RAMP1, RAMP2 or RAMP3; the receptor complexes function as AMYR1, AMYR2 and AMYR3 receptors, respectively, and respond to amylin/IAPP, calcitonin/CT and CGRP1 ligands. Interacts with GPRASP2.

The protein resides in the cell membrane. With respect to regulation, sensitive to cholera toxin. G protein-coupled receptor activated by ligand peptides amylin (IAPP), calcitonin (CT/CALCA) and calcitonin gene-related peptide type 1 (CGRP1/CALCA). CALCR interacts with receptor-activity-modifying proteins RAMP1, 2 and 3 to form receptor complexes AMYR1, 2 and 3, respectively. IAPP, CT and CGRP1 activate CALCR and AMYRs with distinct modes of receptor activation resulting in specific phenotypes. Ligand binding causes a conformation change that triggers signaling via guanine nucleotide-binding proteins (G proteins) and modulates the activity of downstream effectors. Activates cAMP-dependent pathway. In terms of biological role, non-functional protein. Unable to couple to G proteins and activate adenylyl cyclase. Does not undergo receptor internalization following ligand binding. This chain is Calcitonin receptor, found in Homo sapiens (Human).